The sequence spans 288 residues: Histone-lysine N-methyltransferase Suv4-20 (288 aa).

The SET domain occupies 128–238; sequence QECKRYSQEG…PGDEITCFYG (111 aa).

This sequence belongs to the class V-like SAM-binding methyltransferase superfamily. Histone-lysine methyltransferase family. Suvar4-20 subfamily.

It is found in the nucleus. The protein localises to the chromosome. The catalysed reaction is N(6)-methyl-L-lysyl(20)-[histone H4] + S-adenosyl-L-methionine = N(6),N(6)-dimethyl-L-lysyl(20)-[histone H4] + S-adenosyl-L-homocysteine + H(+). The enzyme catalyses N(6),N(6)-dimethyl-L-lysyl(20)-[histone H4] + S-adenosyl-L-methionine = N(6),N(6),N(6)-trimethyl-L-lysyl(20)-[histone H4] + S-adenosyl-L-homocysteine + H(+). In terms of biological role, histone methyltransferase that specifically di- and trimethylates 'Lys-20' of histone H4 (H4K20me2/me3). H4 'Lys-20' trimethylation represents a specific tag for epigenetic transcriptional repression. Contributes to dosage compensation of X chromosome-relative to autosome-linked gene expression, possibly by converting H4K20me1 to H4K20m2/me3 on autosomes. Involved in the regulation of growth and body fat metabolism downstream of the TOR complex 2 pathway. This chain is Histone-lysine N-methyltransferase Suv4-20 (set-4), found in Caenorhabditis elegans.